Here is a 312-residue protein sequence, read N- to C-terminus: HTH-type transcriptional regulator TdcA (312 aa).

An HTH lysR-type domain is found at proline 7–threonine 64. The H-T-H motif DNA-binding region spans isoleucine 24 to asparagine 43.

Belongs to the LysR transcriptional regulatory family.

It participates in amino-acid degradation; L-threonine degradation via propanoate pathway [regulation]. Transcriptional activator for the tdcABCDE operon. The chain is HTH-type transcriptional regulator TdcA (tdcA) from Escherichia coli O157:H7.